The chain runs to 152 residues: UPF0225 protein KPK_2103 (152 aa).

The protein belongs to the UPF0225 family.

The protein is UPF0225 protein KPK_2103 of Klebsiella pneumoniae (strain 342).